The following is a 137-amino-acid chain: Large ribosomal subunit protein uL16c (137 aa).

Positions 1–17 (MLSPKKTRFRRQHRGRM) are enriched in basic residues. A disordered region spans residues 1-21 (MLSPKKTRFRRQHRGRMKGLS).

This sequence belongs to the universal ribosomal protein uL16 family. In terms of assembly, part of the 50S ribosomal subunit.

Its subcellular location is the plastid. In Cuscuta obtusiflora (Peruvian dodder), this protein is Large ribosomal subunit protein uL16c.